The following is a 1178-amino-acid chain: DNA-directed RNA polymerase subunit beta' (1178 aa).

Zn(2+)-binding residues include Cys60, Cys62, Cys75, and Cys78. The Mg(2+) site is built by Asp450, Asp452, and Asp454. Zn(2+) is bound by residues Cys795, Cys869, Cys876, and Cys879.

Belongs to the RNA polymerase beta' chain family. In terms of assembly, the RNAP catalytic core consists of 2 alpha, 1 beta, 1 beta' and 1 omega subunit. When a sigma factor is associated with the core the holoenzyme is formed, which can initiate transcription. It depends on Mg(2+) as a cofactor. The cofactor is Zn(2+).

The catalysed reaction is RNA(n) + a ribonucleoside 5'-triphosphate = RNA(n+1) + diphosphate. Its function is as follows. DNA-dependent RNA polymerase catalyzes the transcription of DNA into RNA using the four ribonucleoside triphosphates as substrates. This Clostridium beijerinckii (strain ATCC 51743 / NCIMB 8052) (Clostridium acetobutylicum) protein is DNA-directed RNA polymerase subunit beta'.